A 102-amino-acid polypeptide reads, in one-letter code: Small ribosomal subunit protein uS10 (102 aa).

This sequence belongs to the universal ribosomal protein uS10 family. As to quaternary structure, part of the 30S ribosomal subunit.

Its function is as follows. Involved in the binding of tRNA to the ribosomes. This Methanocorpusculum labreanum (strain ATCC 43576 / DSM 4855 / Z) protein is Small ribosomal subunit protein uS10.